We begin with the raw amino-acid sequence, 748 residues long: Catalase-peroxidase (748 aa).

The span at 1-14 (MTDTSDARPPHSDA) shows a compositional bias: basic and acidic residues. A disordered region spans residues 1–40 (MTDTSDARPPHSDAKTASNSESENPAIDSPEPKSHAPLTN). Positions 112 to 239 (WHAAGTYRIF…FGATTMGLIY (128 aa)) form a cross-link, tryptophyl-tyrosyl-methioninium (Trp-Tyr) (with M-265). Histidine 113 acts as the Proton acceptor in catalysis. Residues 239 to 265 (YVNPEGPEGKPDPLAAAHDIRETFGRM) constitute a cross-link (tryptophyl-tyrosyl-methioninium (Tyr-Met) (with W-112)). Histidine 280 provides a ligand contact to heme b.

The protein belongs to the peroxidase family. Peroxidase/catalase subfamily. Homodimer or homotetramer. Heme b serves as cofactor. Post-translationally, formation of the three residue Trp-Tyr-Met cross-link is important for the catalase, but not the peroxidase activity of the enzyme.

It catalyses the reaction H2O2 + AH2 = A + 2 H2O. The enzyme catalyses 2 H2O2 = O2 + 2 H2O. Bifunctional enzyme with both catalase and broad-spectrum peroxidase activity. This chain is Catalase-peroxidase, found in Mycolicibacterium gilvum (strain PYR-GCK) (Mycobacterium gilvum (strain PYR-GCK)).